Here is a 162-residue protein sequence, read N- to C-terminus: Probable chemoreceptor glutamine deamidase CheD 2 (162 aa).

It belongs to the CheD family.

It catalyses the reaction L-glutaminyl-[protein] + H2O = L-glutamyl-[protein] + NH4(+). Functionally, probably deamidates glutamine residues to glutamate on methyl-accepting chemotaxis receptors (MCPs), playing an important role in chemotaxis. The chain is Probable chemoreceptor glutamine deamidase CheD 2 from Geobacter metallireducens (strain ATCC 53774 / DSM 7210 / GS-15).